We begin with the raw amino-acid sequence, 838 residues long: MSLSHLYRDGEGHLDDDDDDERENFEITDWDLQNEFNPNRQRHWQTKEEATYGVWAERDSDEERPSFGGKRARDYSAPVNFISAGLKKGAAEEADSEDSDAEEKPVKQEDFPKDLGPKKLKTGGNFKPSQKGFSGGTKSFMDFGSWERHTKGIGQKLLQKMGYVPGRGLGKNAQGIINPIEAKQRKGKGAVGAYGSERTTQSLQDFPVADSEEEAEEEFQKELSQWRKDPSGSKKKPKYSYKTVEELKAKGRVSKKLTAPQKELSQVKVIDMTGREQKVYYSYSQISHKHSVPDEGVPLLAQLPPTAGKEARMPGFALPELEHNLQLLIERTEQEIIQSDRQLQYERDMVVSLSHELEKTAEVLAHEERVISNLSKVLALVEECERRMQPHGADPLTLDECARIFETLQDKYYEEYRLADRADLAVAIVYPLVKDYFKDWHPLEDGSYGTQIISKWKSLLENDQLLSHSSQDLSSDAFHRLMWEVWMPFVRNVVAQWQPRNCEPMVDFLDSWAHIIPVWILDNILDQLIFPKLQKEVDNWNPLTDTVPIHSWIHPWLPLMQARLEPLYSPVRSKLSSALQKWHPSDASAKLILQPWKEVLTPGSWEAFMLRNIVPKLGMCLGELVINPHQQHMDAFYWVMDWEGMISVSSLVGLLEKHFFPKWLQVLCSWLSNSPNYEEITKWYLGWKSMFSDQVLAHPSVKDKFNEALDIMNRAVSSNVGAYMQPGARENIAYLTHTERRKDFQYEAMQERREAENMAQRGIGVAASSVPMNFKDLIETKAEEHNIVFMPVIGKRHEGKQLYTFGRIVIYIDRGVVFVQGEKTWVPTSLQSLIDMAK.

Residues 1–13 (MSLSHLYRDGEGH) show a composition bias toward basic and acidic residues. Residues 1 to 51 (MSLSHLYRDGEGHLDDDDDDERENFEITDWDLQNEFNPNRQRHWQTKEEAT) form a required for interaction with DHX15 region. Disordered stretches follow at residues 1-74 (MSLS…RARD) and 86-137 (LKKG…SGGT). Ser2 carries the phosphoserine modification. Residues 14–29 (LDDDDDDERENFEITD) show a composition bias toward acidic residues. The segment covering 45-65 (QTKEEATYGVWAERDSDEERP) has biased composition (basic and acidic residues). 3 positions are modified to phosphoserine: Ser60, Ser96, and Ser99. Residues 92-101 (EEADSEDSDA) show a composition bias toward acidic residues. Positions 102 to 117 (EEKPVKQEDFPKDLGP) are enriched in basic and acidic residues. Phosphoserine is present on Ser145. Residues 150–196 (TKGIGQKLLQKMGYVPGRGLGKNAQGIINPIEAKQRKGKGAVGAYGS) form the G-patch domain. The segment at 193–237 (AYGSERTTQSLQDFPVADSEEEAEEEFQKELSQWRKDPSGSKKKP) is disordered. The residue at position 211 (Ser211) is a Phosphoserine. A compositionally biased stretch (basic and acidic residues) spans 218–232 (EFQKELSQWRKDPSG). Positions 701 to 706 (VKDKFN) match the Nuclear localization signal motif. Residues 711–735 (IMNRAVSSNVGAYMQPGARENIAYL) form a required for nuclear speckle localization region.

Belongs to the TFP11/STIP family. In terms of assembly, identified in the spliceosome C complex. Found in the Intron Large (IL) complex, a post-mRNA release spliceosomal complex containing the excised intron, U2, U5 and U6 snRNPs, and splicing factors. Interacts with TUFT1. Interacts with DHX15; indicative for a recruitment of DHX15 to the IL complex. Interacts with GCFC2. As to expression, widely expressed. In tooth it is expressed in ameloblasts and odontoblasts.

The protein localises to the cytoplasm. The protein resides in the nucleus. Functionally, involved in pre-mRNA splicing, specifically in spliceosome disassembly during late-stage splicing events. Intron turnover seems to proceed through reactions in two lariat-intron associated complexes termed Intron Large (IL) and Intron Small (IS). In cooperation with DHX15 seems to mediate the transition of the U2, U5 and U6 snRNP-containing IL complex to the snRNP-free IS complex leading to efficient debranching and turnover of excised introns. May play a role in the differentiation of ameloblasts and odontoblasts or in the forming of the enamel extracellular matrix. The protein is Tuftelin-interacting protein 11 (Tfip11) of Mus musculus (Mouse).